Here is a 440-residue protein sequence, read N- to C-terminus: FAD-dependent monooxygenase afoD (440 aa).

Residues 10 to 30 form a helical membrane-spanning segment; the sequence is PLSIAIIGGGIIGLMTALGLL. Glu-41, Leu-145, and Asp-320 together coordinate FAD. The N-linked (GlcNAc...) asparagine glycan is linked to Asn-352.

This sequence belongs to the paxM FAD-dependent monooxygenase family. FAD is required as a cofactor.

The protein localises to the membrane. In terms of biological role, FAD-dependent monooxygenase; part of the gene cluster that mediates the biosynthesis of asperfuranone, a probable antitumor agent. The polyketide synthase afoG is responsible for producing the 3,5-dimethyloctadienone moiety from acetyl-CoA, three malonyl-CoA, and two S-adenosyl methionines (SAM). The 3,5-dimethyloctadienone moiety is then loaded onto the SAT domain of afoE and extended with four malonyl-CoA and one SAM, which leads to the formation of 2,4-dihydroxy-6-(5,7-dimethyl-2-oxo-trans-3-trans-5-nonadienyl)-3-methylbenzaldehyde (compound 2) after reductive release and aldol condensation. AfoD is the next enzyme in the biosynthesis sequence and hydroxylates the side chain at the benzylic position of compound 2. After benzylic hydroxylation, a furan ring is formed after five-member ring hemiacetal formation and water elimination. AfoF and afoC are proposed to oxidize the R-diketone proton and to reduce the unconjugated carbonyl group, respectively, to generate asperfuranone. Since no intermediates could be isolated from afoF and afoC deletants, the sequence of these two enzymes is not fully understood. Moreover, since afoC deletant still produces a small amount of asperfuranone, other endogenous oxidoreductases might catalyze the same reaction with much less efficiency. This Emericella nidulans (strain FGSC A4 / ATCC 38163 / CBS 112.46 / NRRL 194 / M139) (Aspergillus nidulans) protein is FAD-dependent monooxygenase afoD.